Reading from the N-terminus, the 159-residue chain is Biogenesis of lysosome-related organelles complex 1 subunit 2 (159 aa).

The disordered stretch occupies residues Met-1 to Ala-37. Residues Gln-14–Glu-36 are compositionally biased toward polar residues. Residues Glu-69–Asp-134 adopt a coiled-coil conformation.

This sequence belongs to the BLOC1S2 family. As to quaternary structure, homodimer. Component of the biogenesis of lysosome-related organelles complex-1 (BLOC-1) composed of Blos1, Blos2, Blos3, Blos4, Dysb, Muted, Pldn and Snapin. Interacts with Snapin.

In terms of biological role, component of the biogenesis of lysosome-related organelles complex-1 (BLOC-1) involved in pigment granule biogenesis. This chain is Biogenesis of lysosome-related organelles complex 1 subunit 2, found in Drosophila melanogaster (Fruit fly).